A 182-amino-acid polypeptide reads, in one-letter code: MSSPVRVLDELDAELRAASGLVREVPDFPEPGVLFRDISPMLADGRALAAVVAALGRGHDFDVVAGVEARGFLLGAAVAQAHGTGVVGLRKPGKLPEVAHRVDYRLEYGSASLELPAGTLRAGQRVLVVDDVLATGGTLNAACELVRSAGSEVAAATVVLELTALGGRNKVPDVALHALLTA.

It belongs to the purine/pyrimidine phosphoribosyltransferase family. Homodimer.

Its subcellular location is the cytoplasm. It catalyses the reaction AMP + diphosphate = 5-phospho-alpha-D-ribose 1-diphosphate + adenine. It participates in purine metabolism; AMP biosynthesis via salvage pathway; AMP from adenine: step 1/1. Functionally, catalyzes a salvage reaction resulting in the formation of AMP, that is energically less costly than de novo synthesis. This chain is Adenine phosphoribosyltransferase, found in Saccharopolyspora erythraea (strain ATCC 11635 / DSM 40517 / JCM 4748 / NBRC 13426 / NCIMB 8594 / NRRL 2338).